The primary structure comprises 766 residues: Subtilisin-like protease SBT3.13 (766 aa).

The N-terminal stretch at 1 to 21 (MNNSLQSSKLVLLLAIALVLF) is a signal peptide. The propeptide at 22–120 (LNTELDFLTA…VIPNRIRKLK (99 aa)) is activation peptide. One can recognise an Inhibitor I9 domain in the interval 41 to 119 (VYIVYLGERE…HVIPNRIRKL (79 aa)). One can recognise a Peptidase S8 domain in the interval 134–618 (PTSFSSLSSV…GGLVNPEKAA (485 aa)). Asp-162 functions as the Charge relay system in the catalytic mechanism. N-linked (GlcNAc...) asparagine glycans are attached at residues Asn-195 and Asn-223. Residue His-239 is the Charge relay system of the active site. N-linked (GlcNAc...) asparagine glycans are attached at residues Asn-254 and Asn-389. Ser-549 serves as the catalytic Charge relay system. An N-linked (GlcNAc...) asparagine glycan is attached at Asn-641.

Belongs to the peptidase S8 family.

Its subcellular location is the secreted. In Arabidopsis thaliana (Mouse-ear cress), this protein is Subtilisin-like protease SBT3.13.